The sequence spans 107 residues: SH3 domain-binding glutamic acid-rich-like protein 2 (107 aa).

An SH3-binding motif is present at residues 61–67 (QGNPLPP).

The protein belongs to the SH3BGR family.

It is found in the nucleus. The chain is SH3 domain-binding glutamic acid-rich-like protein 2 (SH3BGRL2) from Pongo abelii (Sumatran orangutan).